We begin with the raw amino-acid sequence, 570 residues long: Periplasmic trehalase (570 aa).

The first 34 residues, 1–34 (MIPPEIRRSVLLQKAIKLALAGTLLTFASFSATA), serve as a signal peptide directing secretion. Residues R159, 166–167 (WD), N203, 212–214 (RSQ), 284–286 (RPE), and G317 contribute to the substrate site. Active-site proton donor/acceptor residues include D319 and E503. E518 serves as a coordination point for substrate. The interval 544 to 570 (KPCDSVPSTRPASLSATPTKTPSAATQ) is disordered. Low complexity predominate over residues 554 to 570 (PASLSATPTKTPSAATQ).

It belongs to the glycosyl hydrolase 37 family. As to quaternary structure, monomer.

It is found in the periplasm. The enzyme catalyses alpha,alpha-trehalose + H2O = alpha-D-glucose + beta-D-glucose. In terms of biological role, provides the cells with the ability to utilize trehalose at high osmolarity by splitting it into glucose molecules that can subsequently be taken up by the phosphotransferase-mediated uptake system. The protein is Periplasmic trehalase of Salmonella paratyphi A (strain AKU_12601).